A 314-amino-acid polypeptide reads, in one-letter code: R2-like ligand binding oxidase (314 aa).

Positions 68, 101, and 104 each coordinate Mn(2+). The 3-(O4'-tyrosyl)-valine (Val-Tyr) cross-link spans 71–162 (VTEDIQPFMS…AAQVRASVTY (92 aa)). Glu101 lines the Fe cation pocket. Fe cation contacts are provided by Glu167, Glu202, and His205.

The protein belongs to the ribonucleoside diphosphate reductase small chain family. R2-like ligand binding oxidase subfamily. Homodimer. Requires Fe cation as cofactor. It depends on Mn(2+) as a cofactor.

Functionally, probable oxidase that might be involved in lipid metabolism. The protein is R2-like ligand binding oxidase of Mycobacterium tuberculosis (strain ATCC 25177 / H37Ra).